Consider the following 203-residue polypeptide: Small ribosomal subunit protein uS4c (203 aa).

The region spanning 92 to 150 (MRLDNIIYRLGMAPTIANARQLVNHGHIVVNDRIVTIPSYRCKPKDIISVRNNSTSRNV) is the S4 RNA-binding domain.

Belongs to the universal ribosomal protein uS4 family. Part of the 30S ribosomal subunit. Contacts protein S5. The interaction surface between S4 and S5 is involved in control of translational fidelity.

It is found in the plastid. Its subcellular location is the chloroplast. Functionally, one of the primary rRNA binding proteins, it binds directly to 16S rRNA where it nucleates assembly of the body of the 30S subunit. In terms of biological role, with S5 and S12 plays an important role in translational accuracy. This is Small ribosomal subunit protein uS4c (rps4) from Chlorokybus atmophyticus (Soil alga).